The primary structure comprises 504 residues: L-amino-acid oxidase (504 aa).

An N-terminal signal peptide occupies residues 1–18 (MNVFFMFSLLFLATLGSC). The cysteines at positions 28 and 191 are disulfide-linked. Residues 61 to 62 (MS), 81 to 82 (EA), Arg89, and 105 to 108 (GPMR) each bind FAD. Arg108 contacts substrate. Asn190 is a glycosylation site (N-linked (GlcNAc...) asparagine). Position 241 (His241) interacts with substrate. Val279 contacts FAD. Cys349 and Cys430 are disulfide-bonded. N-linked (GlcNAc...) asparagine glycosylation occurs at Asn379. Tyr390 provides a ligand contact to substrate. FAD-binding positions include Glu475 and 482–487 (GWIDST). 482-483 (GW) lines the substrate pocket.

Belongs to the flavin monoamine oxidase family. FIG1 subfamily. As to quaternary structure, homodimer; non-covalently linked. FAD serves as cofactor. As to expression, expressed by the venom gland.

The protein localises to the secreted. It catalyses the reaction an L-alpha-amino acid + O2 + H2O = a 2-oxocarboxylate + H2O2 + NH4(+). The catalysed reaction is L-leucine + O2 + H2O = 4-methyl-2-oxopentanoate + H2O2 + NH4(+). The enzyme catalyses L-phenylalanine + O2 + H2O = 3-phenylpyruvate + H2O2 + NH4(+). It carries out the reaction L-tryptophan + O2 + H2O = indole-3-pyruvate + H2O2 + NH4(+). It catalyses the reaction L-methionine + O2 + H2O = 4-methylsulfanyl-2-oxobutanoate + H2O2 + NH4(+). The catalysed reaction is L-tyrosine + O2 + H2O = 3-(4-hydroxyphenyl)pyruvate + H2O2 + NH4(+). Catalyzes an oxidative deamination of predominantly hydrophobic and aromatic L-amino acids, thus producing hydrogen peroxide that may contribute to the diverse toxic effects of this enzyme. Is highly active on L-Tyr followed by L-Phe, L-Met, L-Leu, L-Trp, and weakly active on L-Ile, L-Arg, L-Val, L-Lys, and L-Ala. Inhibits ADP- and collagen-induced platelet aggregation. This inhibition is inhibited by catalase, indicating the importance of generated H(2)O(2) for the inhibitory effect. This effect on platelets among snake L-amino-acid oxidases is however controversial, since some of them induce aggregation, whereas the other inhibit agonist-induced aggregation. In vivo, this enzyme induces a rapid, substantial and reversible increase in the paw volume of mice (edema). In addition, myofibrosis, and inflammatory cell infiltration on the paw tissue are also observed. This is L-amino-acid oxidase from Daboia russelii (Russel's viper).